Reading from the N-terminus, the 520-residue chain is Cytochrome P450 72A397 (520 aa).

Residues 14 to 34 traverse the membrane as a helical segment; sequence AVAVAVVVVGWAWKVLNWVWV. Cys-468 is a binding site for heme.

This sequence belongs to the cytochrome P450 family. Requires heme as cofactor.

The protein localises to the membrane. It catalyses the reaction oleanolate + reduced [NADPH--hemoprotein reductase] + O2 = hederagenin + oxidized [NADPH--hemoprotein reductase] + H2O + H(+). Functionally, catalyzes the oxidation of oleanolate at the C-23 position to form hederagenin. This Kalopanax septemlobus (Castor aralia) protein is Cytochrome P450 72A397.